We begin with the raw amino-acid sequence, 144 residues long: Large ribosomal subunit protein uL16 (144 aa).

Over residues 1-19 (MLLPKRVKYRRQHRPKTTG) the composition is skewed to basic residues. The disordered stretch occupies residues 1–23 (MLLPKRVKYRRQHRPKTTGRSKG).

Belongs to the universal ribosomal protein uL16 family. In terms of assembly, part of the 50S ribosomal subunit.

Its function is as follows. Binds 23S rRNA and is also seen to make contacts with the A and possibly P site tRNAs. The chain is Large ribosomal subunit protein uL16 from Staphylococcus aureus (strain Mu50 / ATCC 700699).